The following is a 339-amino-acid chain: tRNA N6-adenosine threonylcarbamoyltransferase (339 aa).

2 residues coordinate Fe cation: His-114 and His-118. Residues 137–141 (VVSGG), Asp-170, Gly-183, Asp-187, and Asn-277 contribute to the substrate site. Asp-305 contacts Fe cation.

This sequence belongs to the KAE1 / TsaD family. The cofactor is Fe(2+).

It localises to the cytoplasm. It carries out the reaction L-threonylcarbamoyladenylate + adenosine(37) in tRNA = N(6)-L-threonylcarbamoyladenosine(37) in tRNA + AMP + H(+). Functionally, required for the formation of a threonylcarbamoyl group on adenosine at position 37 (t(6)A37) in tRNAs that read codons beginning with adenine. Is involved in the transfer of the threonylcarbamoyl moiety of threonylcarbamoyl-AMP (TC-AMP) to the N6 group of A37, together with TsaE and TsaB. TsaD likely plays a direct catalytic role in this reaction. The chain is tRNA N6-adenosine threonylcarbamoyltransferase from Clostridium perfringens (strain SM101 / Type A).